Here is a 196-residue protein sequence, read N- to C-terminus: Probable malonic semialdehyde reductase RutE (196 aa).

Belongs to the nitroreductase family. HadB/RutE subfamily. FMN serves as cofactor.

The catalysed reaction is 3-hydroxypropanoate + NADP(+) = 3-oxopropanoate + NADPH + H(+). In terms of biological role, may reduce toxic product malonic semialdehyde to 3-hydroxypropionic acid, which is excreted. The polypeptide is Probable malonic semialdehyde reductase RutE (Klebsiella pneumoniae (strain 342)).